Reading from the N-terminus, the 379-residue chain is Epoxyqueuosine reductase (379 aa).

The active-site Proton donor is aspartate 140. The 31-residue stretch at 184-214 folds into the 4Fe-4S ferredoxin-type domain; that stretch reads FEPDTPASDLCGSCNQCVKACPTGSLLGEGK. Residues cysteine 194, cysteine 197, cysteine 200, cysteine 204, cysteine 220, cysteine 246, cysteine 249, and cysteine 253 each contribute to the [4Fe-4S] cluster site. The stretch at 307 to 332 is one HEAT-like PBS-type repeat; that stretch reads QRNAIIILARYKDKTAVPDLIDCLQN.

The protein belongs to the QueG family. As to quaternary structure, monomer. Requires cob(II)alamin as cofactor. The cofactor is [4Fe-4S] cluster.

The protein localises to the cytoplasm. The catalysed reaction is epoxyqueuosine(34) in tRNA + AH2 = queuosine(34) in tRNA + A + H2O. It participates in tRNA modification; tRNA-queuosine biosynthesis. Catalyzes the conversion of epoxyqueuosine (oQ) to queuosine (Q), which is a hypermodified base found in the wobble positions of tRNA(Asp), tRNA(Asn), tRNA(His) and tRNA(Tyr). This Listeria monocytogenes serovar 1/2a (strain ATCC BAA-679 / EGD-e) protein is Epoxyqueuosine reductase.